Here is a 316-residue protein sequence, read N- to C-terminus: UDP-N-acetyl-2-amino-2-deoxy-D-glucuronate oxidase (316 aa).

Residues 11-13 (GYI), 32-37 (YDINDS), glutamate 55, 81-84 (NYLH), 101-102 (EK), glutamine 130, and 171-172 (WK) contribute to the NAD(+) site.

Belongs to the Gfo/Idh/MocA family. In terms of assembly, homotetramer.

It catalyses the reaction UDP-2-acetamido-2-deoxy-alpha-D-glucuronate + NAD(+) = UDP-2-acetamido-2-deoxy-alpha-D-ribo-hex-3-uluronate + NADH + H(+). The catalysed reaction is 2-hydroxyglutarate + NAD(+) = 2-oxoglutarate + NADH + H(+). The protein operates within bacterial outer membrane biogenesis; LPS O-antigen biosynthesis. Functionally, plays a role in the biosynthesis of B-band O antigen for serotype O5. Catalyzes the NAD-dependent oxidation of UDP-N-acetylglucosaminuronic acid (UDP-D-GlcNAcA) to UDP-2-acetamido-2-deoxy-3-oxo-D-glucuronic acid (UDP-3-oxo-D-GlcNAcA). Cannot use UDP-GlcNAc or UDP-GalNAc as the nucleotide sugar substrate, and can use only poorly UDP-D-glucuronic acid (UDP-GlcA). Undergoes an NAD(+) recycling mechanism using 2-oxoglutarate as an oxidant. This chain is UDP-N-acetyl-2-amino-2-deoxy-D-glucuronate oxidase, found in Pseudomonas aeruginosa (strain ATCC 15692 / DSM 22644 / CIP 104116 / JCM 14847 / LMG 12228 / 1C / PRS 101 / PAO1).